The sequence spans 943 residues: Leucine--tRNA ligase (943 aa).

The 'HIGH' region signature appears at 36–46 (PYPSGSMHVGH). The 'KMSKS' region signature appears at 623–627 (KMSSS). The segment at 910 to 943 (ASEVVIHTDPEEAPGPEDRKAGARPLRPGIWLEE) is disordered. Positions 915 to 930 (IHTDPEEAPGPEDRKA) are enriched in basic and acidic residues.

This sequence belongs to the class-I aminoacyl-tRNA synthetase family.

It is found in the cytoplasm. The enzyme catalyses tRNA(Leu) + L-leucine + ATP = L-leucyl-tRNA(Leu) + AMP + diphosphate. The protein is Leucine--tRNA ligase of Methanopyrus kandleri (strain AV19 / DSM 6324 / JCM 9639 / NBRC 100938).